Here is a 104-residue protein sequence, read N- to C-terminus: Large ribosomal subunit protein uL23 (104 aa).

This sequence belongs to the universal ribosomal protein uL23 family. As to quaternary structure, part of the 50S ribosomal subunit. Contacts protein L29, and trigger factor when it is bound to the ribosome.

Its function is as follows. One of the early assembly proteins it binds 23S rRNA. One of the proteins that surrounds the polypeptide exit tunnel on the outside of the ribosome. Forms the main docking site for trigger factor binding to the ribosome. The polypeptide is Large ribosomal subunit protein uL23 (Ralstonia nicotianae (strain ATCC BAA-1114 / GMI1000) (Ralstonia solanacearum)).